We begin with the raw amino-acid sequence, 728 residues long: 1,4-alpha-glucan branching enzyme GlgB (728 aa).

The active-site Nucleophile is Asp405. Glu458 (proton donor) is an active-site residue.

It belongs to the glycosyl hydrolase 13 family. GlgB subfamily. Monomer.

The enzyme catalyses Transfers a segment of a (1-&gt;4)-alpha-D-glucan chain to a primary hydroxy group in a similar glucan chain.. It participates in glycan biosynthesis; glycogen biosynthesis. Its function is as follows. Catalyzes the formation of the alpha-1,6-glucosidic linkages in glycogen by scission of a 1,4-alpha-linked oligosaccharide from growing alpha-1,4-glucan chains and the subsequent attachment of the oligosaccharide to the alpha-1,6 position. This chain is 1,4-alpha-glucan branching enzyme GlgB, found in Shigella boydii serotype 4 (strain Sb227).